Here is a 208-residue protein sequence, read N- to C-terminus: Uridine kinase (208 aa).

Residue 12 to 19 (GGSGGGKT) participates in ATP binding.

Belongs to the uridine kinase family.

Its subcellular location is the cytoplasm. The enzyme catalyses uridine + ATP = UMP + ADP + H(+). It catalyses the reaction cytidine + ATP = CMP + ADP + H(+). It functions in the pathway pyrimidine metabolism; CTP biosynthesis via salvage pathway; CTP from cytidine: step 1/3. It participates in pyrimidine metabolism; UMP biosynthesis via salvage pathway; UMP from uridine: step 1/1. The protein is Uridine kinase of Streptococcus pyogenes serotype M18 (strain MGAS8232).